A 465-amino-acid chain; its full sequence is MTAQDFVVKDIGLAAYGRKELDIAETEMPGLMACRKEFSSSQPLRGARISGSLHMTIQTAVLIETLKAIGADIRWSSSNIFSTQDHAAAAIAATGIPVFAVKGETLEEYWTYIDAIFQWPDGHPSNMILDDGADATNYILVGSRAEQNKDILSHPKTEEEEIFFKQIQKRMDATPGFFTRQRAAIKGVSEETTTGVNRLYQLQKEGLLPFPAINVNDSVTKSKFDNKYGCKESLVDGIRRGTDVMIAGKTAIVCGYGDVGKGSAASLSGAGARVKVTEIDPICALQAAMDGYEVVNLDDAASSADIIITTTGNKDVVRLDHMRQVKDMCILGNIGHFDNEIQVAALRNLPWTNIKPQVDMITFPDGKRIILLSEGRLLNLGNATGHPSFVMSASFTNQVLAQIELFTRAEHYTNEVTVLPKNLDEKVARLHLDRLGIKLTVLSEEQAAYIGVTPQGPYKPNHYRY.

Substrate contacts are provided by threonine 56, aspartate 131, and glutamate 191. 192–194 (TTT) lines the NAD(+) pocket. Lysine 221 and aspartate 225 together coordinate substrate. NAD(+)-binding positions include asparagine 226, 255-260 (GYGDVG), glutamate 278, asparagine 313, 334-336 (IGH), and asparagine 379.

Belongs to the adenosylhomocysteinase family. It depends on NAD(+) as a cofactor.

It localises to the cytoplasm. It carries out the reaction S-adenosyl-L-homocysteine + H2O = L-homocysteine + adenosine. It participates in amino-acid biosynthesis; L-homocysteine biosynthesis; L-homocysteine from S-adenosyl-L-homocysteine: step 1/1. May play a key role in the regulation of the intracellular concentration of adenosylhomocysteine. The polypeptide is Adenosylhomocysteinase (Bartonella tribocorum (strain CIP 105476 / IBS 506)).